A 556-amino-acid chain; its full sequence is Arginine--tRNA ligase (556 aa).

Residues 132–142 carry the 'HIGH' region motif; sequence ANPTGDLHLGH.

This sequence belongs to the class-I aminoacyl-tRNA synthetase family. In terms of assembly, monomer.

The protein resides in the cytoplasm. The catalysed reaction is tRNA(Arg) + L-arginine + ATP = L-arginyl-tRNA(Arg) + AMP + diphosphate. The polypeptide is Arginine--tRNA ligase (Bacillus cereus (strain ATCC 10987 / NRS 248)).